A 988-amino-acid polypeptide reads, in one-letter code: DExH-box ATP-dependent RNA helicase DExH9 (988 aa).

The segment at 1–27 is disordered; sequence MGSVKRKSVEESSDSAPPQKVQREDDS. The Helicase ATP-binding domain occupies 76-232; sequence IKCLDNGESV…WVAKVHQQPC (157 aa). 89–96 lines the ATP pocket; sequence AHTSAGKT. Residues 180–183 carry the DEVH box motif; sequence DEVH. The region spanning 307 to 509 is the Helicase C-terminal domain; it reads DIFKLVKMII…SYNMLLNQLR (203 aa).

This sequence belongs to the DExH box helicase family. SKI2 subfamily. As to expression, ubiquitous but preferentially expressed in active tissues.

It is found in the nucleus. Its subcellular location is the nucleolus. The catalysed reaction is ATP + H2O = ADP + phosphate + H(+). Its function is as follows. ATP-dependent RNA helicase that associates with the RNA exosome complex. Required for proper rRNA biogenesis and development. Involved in the 3'-processing of the 7S pre-RNA to the mature 5.8S rRNA and also in the removal of rRNA maturation by-products. The sequence is that of DExH-box ATP-dependent RNA helicase DExH9 from Arabidopsis thaliana (Mouse-ear cress).